A 206-amino-acid chain; its full sequence is Adenylate kinase (206 aa).

10 to 15 (GAGKGT) serves as a coordination point for ATP. Positions 30–59 (STGDMLRAAVAAGTPVGLKAKDIMASGGLV) are NMP. AMP contacts are provided by residues Thr31, Arg36, 57-59 (GLV), 85-88 (GFPR), and Gln92. The interval 126-142 (NRVAETTARGEQVRADD) is LID. Position 127 (Arg127) interacts with ATP. The AMP site is built by Arg139 and Arg150. Met178 contacts ATP.

This sequence belongs to the adenylate kinase family. Monomer.

Its subcellular location is the cytoplasm. It catalyses the reaction AMP + ATP = 2 ADP. It functions in the pathway purine metabolism; AMP biosynthesis via salvage pathway; AMP from ADP: step 1/1. Catalyzes the reversible transfer of the terminal phosphate group between ATP and AMP. Plays an important role in cellular energy homeostasis and in adenine nucleotide metabolism. This Nitrobacter winogradskyi (strain ATCC 25391 / DSM 10237 / CIP 104748 / NCIMB 11846 / Nb-255) protein is Adenylate kinase.